Consider the following 97-residue polypeptide: Signal recognition particle 19 kDa protein (97 aa).

This sequence belongs to the SRP19 family. In terms of assembly, part of the signal recognition particle protein translocation system, which is composed of SRP and FtsY. Archaeal SRP consists of a 7S RNA molecule of 300 nucleotides and two protein subunits: SRP54 and SRP19.

It localises to the cytoplasm. Involved in targeting and insertion of nascent membrane proteins into the cytoplasmic membrane. Binds directly to 7S RNA and mediates binding of the 54 kDa subunit of the SRP. The protein is Signal recognition particle 19 kDa protein of Pyrobaculum calidifontis (strain DSM 21063 / JCM 11548 / VA1).